Reading from the N-terminus, the 375-residue chain is Carbamoyl phosphate synthase small chain (375 aa).

Positions 1–184 (MVSLYLENGL…LDYKPFDEKT (184 aa)) are CPSase. Residues serine 44, glycine 240, and glycine 242 each contribute to the L-glutamine site. The Glutamine amidotransferase type-1 domain occupies 188–375 (IIAVLDFGAK…KEFVELLKDF (188 aa)). The active-site Nucleophile is the cysteine 268. L-glutamine is bound by residues leucine 269, glutamine 272, asparagine 310, and tyrosine 313. Residues histidine 351 and glutamate 353 contribute to the active site.

It belongs to the CarA family. As to quaternary structure, composed of two chains; the small (or glutamine) chain promotes the hydrolysis of glutamine to ammonia, which is used by the large (or ammonia) chain to synthesize carbamoyl phosphate. Tetramer of heterodimers (alpha,beta)4.

The enzyme catalyses hydrogencarbonate + L-glutamine + 2 ATP + H2O = carbamoyl phosphate + L-glutamate + 2 ADP + phosphate + 2 H(+). It catalyses the reaction L-glutamine + H2O = L-glutamate + NH4(+). It functions in the pathway amino-acid biosynthesis; L-arginine biosynthesis; carbamoyl phosphate from bicarbonate: step 1/1. It participates in pyrimidine metabolism; UMP biosynthesis via de novo pathway; (S)-dihydroorotate from bicarbonate: step 1/3. Its function is as follows. Small subunit of the glutamine-dependent carbamoyl phosphate synthetase (CPSase). CPSase catalyzes the formation of carbamoyl phosphate from the ammonia moiety of glutamine, carbonate, and phosphate donated by ATP, constituting the first step of 2 biosynthetic pathways, one leading to arginine and/or urea and the other to pyrimidine nucleotides. The small subunit (glutamine amidotransferase) binds and cleaves glutamine to supply the large subunit with the substrate ammonia. The sequence is that of Carbamoyl phosphate synthase small chain from Helicobacter pylori (strain ATCC 700392 / 26695) (Campylobacter pylori).